The following is a 92-amino-acid chain: Large ribosomal subunit protein bL36m (92 aa).

The N-terminal 54 residues, 1 to 54 (MASLGRKFFAVGVLSRVFPSAFNAQKGLLKNASMFLTPAFRLSPSLLPWNFSRG), are a transit peptide targeting the mitochondrion.

The protein belongs to the bacterial ribosomal protein bL36 family. As to quaternary structure, component of the mitochondrial large ribosomal subunit (mt-LSU). Mature yeast 74S mitochondrial ribosomes consist of a small (37S) and a large (54S) subunit. The 37S small subunit contains a 15S ribosomal RNA (15S mt-rRNA) and at least 32 different proteins. The 54S large subunit contains a 21S rRNA (21S mt-rRNA) and at least 45 different proteins. bL36m has a zinc binding site.

The protein localises to the mitochondrion. Functionally, component of the mitochondrial ribosome (mitoribosome), a dedicated translation machinery responsible for the synthesis of mitochondrial genome-encoded proteins, including at least some of the essential transmembrane subunits of the mitochondrial respiratory chain. The mitoribosomes are attached to the mitochondrial inner membrane and translation products are cotranslationally integrated into the membrane. bL36m may be involved in a process influencing telomere capping. The sequence is that of Large ribosomal subunit protein bL36m (rtc6) from Schizosaccharomyces pombe (strain 972 / ATCC 24843) (Fission yeast).